The chain runs to 275 residues: Lectin (275 aa).

A signal peptide spans 1–30 (MASLQTQMISFYLIFLSILLTTIFFFKVNS). Residues aspartate 111 and glycine 129 each contribute to the D-glucose site. Residues glutamate 149 and aspartate 151 each coordinate Mn(2+). Residues aspartate 151, phenylalanine 153, asparagine 155, and aspartate 159 each coordinate Ca(2+). Mn(2+)-binding residues include aspartate 159 and histidine 166. The propeptide occupies 211–217 (NSLEEEN). D-glucose contacts are provided by glycine 246 and alanine 247. Residues 270–275 (KQAADA) constitute a propeptide that is removed on maturation.

This sequence belongs to the leguminous lectin family. In terms of assembly, heterotetramer of two alpha and two beta chains. In terms of processing, the mature form consists of two chains, alpha and beta, produced by cleavage of the immature protein. These remain cleaved, yet fold together to form one subunit.

Its function is as follows. D-mannose specific lectin. In Lens culinaris (Lentil), this protein is Lectin.